We begin with the raw amino-acid sequence, 200 residues long: MELVMKDAQSLTVSETTFGRDFNEALVHQVVVAYAAGARQGTRAQKTRAEVTGSGKKPWRQKGTGRARSGSIKSPIWRSGGITFAAKPQDHSQKVNKKMYRGALKSILSELVRQDRLIIVEKFAVEAPKTKLLVQKLKDMALEDVMIVTHEVDENLFLAARNLYKVDVRDVTAIDPVSLIAFGKVVMTAEAVKQVEEMLA.

Positions 44-70 (AQKTRAEVTGSGKKPWRQKGTGRARSG) are disordered.

The protein belongs to the universal ribosomal protein uL4 family. In terms of assembly, part of the 50S ribosomal subunit.

Functionally, one of the primary rRNA binding proteins, this protein initially binds near the 5'-end of the 23S rRNA. It is important during the early stages of 50S assembly. It makes multiple contacts with different domains of the 23S rRNA in the assembled 50S subunit and ribosome. Protein L4 is a both a transcriptional repressor and a translational repressor protein. It regulates transcription of the S10 operon (to which L4 belongs) by causing premature termination of transcription within the S10 leader. L4 controls the translation of the S10 operon by binding to its mRNA. Its function is as follows. This protein when expressed in E.coli represses both transcription and translation of the endogenous S10 operon. As the M.morganii S10 leader can be regulated in vitro by the E.coli L4 protein this strongly suggests the endogenous protein controls its own S10 operon in a similar fashion. In terms of biological role, forms part of the polypeptide exit tunnel. In Morganella morganii (Proteus morganii), this protein is Large ribosomal subunit protein uL4 (rplD).